Here is a 95-residue protein sequence, read N- to C-terminus: Aspartyl/glutamyl-tRNA(Asn/Gln) amidotransferase subunit C (95 aa).

Belongs to the GatC family. As to quaternary structure, heterotrimer of A, B and C subunits.

The enzyme catalyses L-glutamyl-tRNA(Gln) + L-glutamine + ATP + H2O = L-glutaminyl-tRNA(Gln) + L-glutamate + ADP + phosphate + H(+). It carries out the reaction L-aspartyl-tRNA(Asn) + L-glutamine + ATP + H2O = L-asparaginyl-tRNA(Asn) + L-glutamate + ADP + phosphate + 2 H(+). Functionally, allows the formation of correctly charged Asn-tRNA(Asn) or Gln-tRNA(Gln) through the transamidation of misacylated Asp-tRNA(Asn) or Glu-tRNA(Gln) in organisms which lack either or both of asparaginyl-tRNA or glutaminyl-tRNA synthetases. The reaction takes place in the presence of glutamine and ATP through an activated phospho-Asp-tRNA(Asn) or phospho-Glu-tRNA(Gln). This is Aspartyl/glutamyl-tRNA(Asn/Gln) amidotransferase subunit C from Phenylobacterium zucineum (strain HLK1).